Reading from the N-terminus, the 171-residue chain is UPF0725 protein At3g25080 (171 aa).

It belongs to the UPF0725 (EMB2204) family.

This is UPF0725 protein At3g25080 from Arabidopsis thaliana (Mouse-ear cress).